Consider the following 436-residue polypeptide: Probable glucose-6-phosphate isomerase (436 aa).

Glu-272 acts as the Proton donor in catalysis. Active-site residues include His-293 and Lys-404.

This sequence belongs to the GPI family.

It localises to the cytoplasm. It carries out the reaction alpha-D-glucose 6-phosphate = beta-D-fructose 6-phosphate. Its pathway is carbohydrate biosynthesis; gluconeogenesis. The protein operates within carbohydrate degradation; glycolysis; D-glyceraldehyde 3-phosphate and glycerone phosphate from D-glucose: step 2/4. Catalyzes the reversible isomerization of glucose-6-phosphate to fructose-6-phosphate. The sequence is that of Probable glucose-6-phosphate isomerase from Haloarcula marismortui (strain ATCC 43049 / DSM 3752 / JCM 8966 / VKM B-1809) (Halobacterium marismortui).